The primary structure comprises 622 residues: DNA mismatch repair protein MutL (622 aa).

This sequence belongs to the DNA mismatch repair MutL/HexB family.

Its function is as follows. This protein is involved in the repair of mismatches in DNA. It is required for dam-dependent methyl-directed DNA mismatch repair. May act as a 'molecular matchmaker', a protein that promotes the formation of a stable complex between two or more DNA-binding proteins in an ATP-dependent manner without itself being part of a final effector complex. This chain is DNA mismatch repair protein MutL, found in Phenylobacterium zucineum (strain HLK1).